The sequence spans 433 residues: Glutamate-1-semialdehyde 2,1-aminomutase (433 aa).

Lys-272 is subject to N6-(pyridoxal phosphate)lysine.

The protein belongs to the class-III pyridoxal-phosphate-dependent aminotransferase family. HemL subfamily. In terms of assembly, homodimer. Requires pyridoxal 5'-phosphate as cofactor.

Its subcellular location is the cytoplasm. The catalysed reaction is (S)-4-amino-5-oxopentanoate = 5-aminolevulinate. The protein operates within porphyrin-containing compound metabolism; protoporphyrin-IX biosynthesis; 5-aminolevulinate from L-glutamyl-tRNA(Glu): step 2/2. The protein is Glutamate-1-semialdehyde 2,1-aminomutase of Methylacidiphilum infernorum (isolate V4) (Methylokorus infernorum (strain V4)).